A 236-amino-acid chain; its full sequence is Thioredoxin-like 2-2, chloroplastic (236 aa).

A chloroplast-targeting transit peptide spans 1–82 (MAGVVRLTTT…LRRPKSQVVR (82 aa)). One can recognise a Thioredoxin domain in the interval 83 to 220 (VKVDENVAET…QLELGITLQT (138 aa)). Residues cysteine 135 and cysteine 138 each act as nucleophile in the active site. A disulfide bond links cysteine 135 and cysteine 138.

The protein belongs to the thioredoxin family.

It is found in the plastid. The protein resides in the chloroplast. Its function is as follows. Thiol-disulfide oxidoreductase that may participate in various redox reactions. Possesses insulin disulfide bonds reducing activity. This Arabidopsis thaliana (Mouse-ear cress) protein is Thioredoxin-like 2-2, chloroplastic.